A 404-amino-acid chain; its full sequence is CD2 homolog (404 aa).

A signal peptide spans 1–16; that stretch reads MFITLIFLSYINIVLS. Residues 17 to 225 are Extracellular-facing; that stretch reads NNYWARLNET…QNYFLENIHT (209 aa). Residues Asn24, Asn87, Asn92, Asn96, Asn122, Asn139, Asn167, Asn193, Asn200, and Asn206 are each glycosylated (N-linked (GlcNAc...) asparagine; by host). Disulfide bonds link Cys140-Cys207 and Cys147-Cys190. Residues 226–246 traverse the membrane as a helical segment; it reads LFYIIIFIVSGLIASIFISII. Over 247–404 the chain is Cytoplasmic; sequence TFLSLRKRKK…ISLIHVDRII (158 aa). Residues 260 to 295 form a disordered region; sequence EIESPPPESNEEEQCQHDDTTSIHEPSPREPLLPKP. A compositionally biased stretch (basic and acidic residues) spans 273–287; the sequence is QCQHDDTTSIHEPSP. 7 repeat units span residues 322 to 327, 328 to 333, 334 to 339, 340 to 345, 346 to 351, 352 to 357, and 358 to 363. The segment at 322 to 363 is 7 X 6 AA tandem repeats of [KN]-P-C-P-P-P; sequence NPCPPPKPCPPPKPCPPPKPCPPPKPCPPPKPCPPPKPCPPP. Over residues 357–388 the composition is skewed to pro residues; that stretch reads PKPCPPPKPCSSPESYSPPKPLPSIPLLPNIP. The segment at 357 to 390 is disordered; sequence PKPCPPPKPCSSPESYSPPKPLPSIPLLPNIPPL.

The protein belongs to the asfivirus CD2 homolog protein family. In terms of assembly, both glycosylated and nonglycosylated forms interact (via C-terminus) with the host AP-1 complex. Post-translationally, cleaved into two fragments of 63 kDa and 26 kDa containing respectively the glycosylated N-terminus and the nonglycosylated C-terminus. A full-length 89-kDa glycosylated form also exists.

It is found in the host membrane. The protein localises to the virion membrane. It localises to the host Golgi apparatus. May play an immunosuppressive role by inhibiting lymphocyte proliferation and subsequently facilitating viral replication and generalization of infection. Responsible for viral hemadsorption, which may help viral spread. Increases virus replication in the tick vector at the step of virus uptake or replication in the tick gut. May play a role in the host Golgi reorganization to yield viral factories. May play a role in host cell penetration. The sequence is that of CD2 homolog from African swine fever virus (isolate Tick/South Africa/Pretoriuskop Pr4/1996) (ASFV).